The following is a 434-amino-acid chain: Eukaryotic translation initiation factor 3 subunit E (434 aa).

The region spanning 219-392 (FFNHPKGRDL…GHVVMGTQPL (174 aa)) is the PCI domain.

Belongs to the eIF-3 subunit E family. Component of the eukaryotic translation initiation factor 3 (eIF-3) complex. The eIF-3 complex interacts with pix. Interacts with mxt.

It is found in the cytoplasm. Its function is as follows. Component of the eukaryotic translation initiation factor 3 (eIF-3) complex, which is involved in protein synthesis of a specialized repertoire of mRNAs and, together with other initiation factors, stimulates binding of mRNA and methionyl-tRNAi to the 40S ribosome. The eIF-3 complex specifically targets and initiates translation of a subset of mRNAs involved in cell proliferation. The protein is Eukaryotic translation initiation factor 3 subunit E (eIF3-S6) of Drosophila ananassae (Fruit fly).